Consider the following 418-residue polypeptide: UDP-N-acetylglucosamine 1-carboxyvinyltransferase (418 aa).

Residue 22–23 (KN) coordinates phosphoenolpyruvate. A UDP-N-acetyl-alpha-D-glucosamine-binding site is contributed by Arg-91. The Proton donor role is filled by Cys-115. Cys-115 carries the post-translational modification 2-(S-cysteinyl)pyruvic acid O-phosphothioketal. UDP-N-acetyl-alpha-D-glucosamine-binding positions include 120-124 (RPVDL), Asp-305, and Ile-327.

The protein belongs to the EPSP synthase family. MurA subfamily.

The protein localises to the cytoplasm. The catalysed reaction is phosphoenolpyruvate + UDP-N-acetyl-alpha-D-glucosamine = UDP-N-acetyl-3-O-(1-carboxyvinyl)-alpha-D-glucosamine + phosphate. Its pathway is cell wall biogenesis; peptidoglycan biosynthesis. In terms of biological role, cell wall formation. Adds enolpyruvyl to UDP-N-acetylglucosamine. The chain is UDP-N-acetylglucosamine 1-carboxyvinyltransferase from Wigglesworthia glossinidia brevipalpis.